Reading from the N-terminus, the 364-residue chain is Glycosyltransferase 8 domain-containing protein 1 (364 aa).

At 1-5 (MRRVH) the chain is on the cytoplasmic side. The chain crosses the membrane as a helical; Signal-anchor for type II membrane protein span at residues 6–26 (ITVILLAAVIFLLVLHHNILG). Over 27–364 (LSDILKRQNS…QFSLIRRHAE (338 aa)) the chain is Lumenal. 3 N-linked (GlcNAc...) asparagine glycosylation sites follow: Asn102, Asn247, and Asn255.

This sequence belongs to the glycosyltransferase 8 family.

It is found in the membrane. This Xenopus laevis (African clawed frog) protein is Glycosyltransferase 8 domain-containing protein 1 (glt8d1).